A 45-amino-acid chain; its full sequence is MTSGNNINQPVTYPIFTVRWLAVHTLAVPTVFFLGAIASMQFIQR.

A helical transmembrane segment spans residues 20–36 (WLAVHTLAVPTVFFLGA). Histidine 24 contacts heme.

This sequence belongs to the PsbE/PsbF family. In terms of assembly, heterodimer of an alpha subunit and a beta subunit. PSII is composed of 1 copy each of membrane proteins PsbA, PsbB, PsbC, PsbD, PsbE, PsbF, PsbH, PsbI, PsbJ, PsbK, PsbL, PsbM, PsbT, PsbX, PsbY, PsbZ, Psb30/Ycf12, peripheral proteins PsbO, CyanoQ (PsbQ), PsbU, PsbV and a large number of cofactors. It forms dimeric complexes. Heme b is required as a cofactor.

It localises to the cellular thylakoid membrane. In terms of biological role, this b-type cytochrome is tightly associated with the reaction center of photosystem II (PSII). PSII is a light-driven water:plastoquinone oxidoreductase that uses light energy to abstract electrons from H(2)O, generating O(2) and a proton gradient subsequently used for ATP formation. It consists of a core antenna complex that captures photons, and an electron transfer chain that converts photonic excitation into a charge separation. The chain is Cytochrome b559 subunit beta from Trichormus variabilis (strain ATCC 29413 / PCC 7937) (Anabaena variabilis).